We begin with the raw amino-acid sequence, 496 residues long: Glycerol kinase (496 aa).

T12 contacts ADP. ATP is bound by residues T12, T13, and S14. Residue T12 participates in sn-glycerol 3-phosphate binding. R16 serves as a coordination point for ADP. 3 residues coordinate sn-glycerol 3-phosphate: R82, E83, and Y134. Glycerol contacts are provided by R82, E83, and Y134. H230 carries the phosphohistidine; by HPr modification. A sn-glycerol 3-phosphate-binding site is contributed by D244. Positions 244 and 245 each coordinate glycerol. T266 and G309 together coordinate ADP. Residues T266, G309, Q313, and G410 each coordinate ATP. ADP contacts are provided by G410 and N414.

This sequence belongs to the FGGY kinase family. As to quaternary structure, homotetramer and homodimer (in equilibrium). The phosphoenolpyruvate-dependent sugar phosphotransferase system (PTS), including enzyme I, and histidine-containing protein (HPr) are required for the phosphorylation, which leads to the activation of the enzyme.

The catalysed reaction is glycerol + ATP = sn-glycerol 3-phosphate + ADP + H(+). The protein operates within polyol metabolism; glycerol degradation via glycerol kinase pathway; sn-glycerol 3-phosphate from glycerol: step 1/1. Activated by phosphorylation and inhibited by fructose 1,6-bisphosphate (FBP). Key enzyme in the regulation of glycerol uptake and metabolism. Catalyzes the phosphorylation of glycerol to yield sn-glycerol 3-phosphate. The chain is Glycerol kinase from Bacillus anthracis (strain A0248).